Here is a 1058-residue protein sequence, read N- to C-terminus: Carbamoyl phosphate synthase large chain (1058 aa).

The segment at 1–401 is carboxyphosphate synthetic domain; sequence MPKRKDIQKI…SLLKACRSLE (401 aa). ATP is bound by residues Arg-129, Arg-169, Gly-175, Gly-176, Arg-208, Ile-210, Glu-215, Gly-241, Ile-242, His-243, Gln-284, and Glu-298. Positions 133 to 327 constitute an ATP-grasp 1 domain; the sequence is KQLMQELDQP…IAKLAAKIAV (195 aa). Gln-284, Glu-298, and Asn-300 together coordinate Mg(2+). Mn(2+) contacts are provided by Gln-284, Glu-298, and Asn-300. An oligomerization domain region spans residues 402 to 546; it reads IGVCHNEMTS…YSTYELENES (145 aa). The interval 547-929 is carbamoyl phosphate synthetic domain; the sequence is VQSNKESILV…ALYKAFEANN (383 aa). Residues 671 to 861 enclose the ATP-grasp 2 domain; the sequence is EKALKELGIP…MAQIATKLIL (191 aa). ATP contacts are provided by Arg-707, Ser-746, Ile-748, Glu-752, Gly-777, Val-778, His-779, Ser-780, Gln-820, and Glu-832. Positions 820, 832, and 834 each coordinate Mg(2+). Mn(2+)-binding residues include Gln-820, Glu-832, and Asn-834. Positions 930–1058 constitute an MGS-like domain; that stretch reads SHLSEFGQIV…ESRCFNIEAI (129 aa). Residues 930 to 1058 are allosteric domain; sequence SHLSEFGQIV…ESRCFNIEAI (129 aa).

Belongs to the CarB family. As to quaternary structure, composed of two chains; the small (or glutamine) chain promotes the hydrolysis of glutamine to ammonia, which is used by the large (or ammonia) chain to synthesize carbamoyl phosphate. Tetramer of heterodimers (alpha,beta)4. Requires Mg(2+) as cofactor. It depends on Mn(2+) as a cofactor.

It catalyses the reaction hydrogencarbonate + L-glutamine + 2 ATP + H2O = carbamoyl phosphate + L-glutamate + 2 ADP + phosphate + 2 H(+). The catalysed reaction is hydrogencarbonate + NH4(+) + 2 ATP = carbamoyl phosphate + 2 ADP + phosphate + 2 H(+). It participates in amino-acid biosynthesis; L-arginine biosynthesis; carbamoyl phosphate from bicarbonate: step 1/1. It functions in the pathway pyrimidine metabolism; UMP biosynthesis via de novo pathway; (S)-dihydroorotate from bicarbonate: step 1/3. In terms of biological role, large subunit of the glutamine-dependent carbamoyl phosphate synthetase (CPSase). CPSase catalyzes the formation of carbamoyl phosphate from the ammonia moiety of glutamine, carbonate, and phosphate donated by ATP, constituting the first step of 2 biosynthetic pathways, one leading to arginine and/or urea and the other to pyrimidine nucleotides. The large subunit (synthetase) binds the substrates ammonia (free or transferred from glutamine from the small subunit), hydrogencarbonate and ATP and carries out an ATP-coupled ligase reaction, activating hydrogencarbonate by forming carboxy phosphate which reacts with ammonia to form carbamoyl phosphate. This is Carbamoyl phosphate synthase large chain from Streptococcus pyogenes serotype M18 (strain MGAS8232).